Consider the following 293-residue polypeptide: Phycoerythrin class 2 subunit gamma, linker polypeptide (293 aa).

Residue C49 coordinates phycourobilin. The region spanning 50–229 (AAMGIGIGPR…LGGMKVAISD (180 aa)) is the PBS-linker domain.

In terms of processing, contains one covalently linked phycourobilin chromophore.

Its subcellular location is the cellular thylakoid membrane. Its function is as follows. This protein is a bile pigment-bearing rod linker polypeptide that associates with C-phycoerythrin. This is Phycoerythrin class 2 subunit gamma, linker polypeptide (mpeC) from Synechococcus sp. (strain WH8020).